We begin with the raw amino-acid sequence, 1393 residues long: DNA-directed RNA polymerase subunit beta (1393 aa).

This sequence belongs to the RNA polymerase beta chain family. As to quaternary structure, the RNAP catalytic core consists of 2 alpha, 1 beta, 1 beta' and 1 omega subunit. When a sigma factor is associated with the core the holoenzyme is formed, which can initiate transcription.

The enzyme catalyses RNA(n) + a ribonucleoside 5'-triphosphate = RNA(n+1) + diphosphate. In terms of biological role, DNA-dependent RNA polymerase catalyzes the transcription of DNA into RNA using the four ribonucleoside triphosphates as substrates. This Rhodospirillum rubrum (strain ATCC 11170 / ATH 1.1.1 / DSM 467 / LMG 4362 / NCIMB 8255 / S1) protein is DNA-directed RNA polymerase subunit beta.